The sequence spans 99 residues: Protein AC150 (99 aa).

The Chitin-binding type-2 domain maps to 38–96 (GFSCYNKPIGVNFPHPTRCDAFYMCVGLNQKLELICPEGFEFDPDVKNCVPISDYGCTA). Residues C73 and C86 are joined by a disulfide bond.

The protein localises to the host nucleus. It localises to the virion. Its function is as follows. Plays a role in primary oral infection of the host. This is Protein AC150 from Autographa californica nuclear polyhedrosis virus (AcMNPV).